The following is a 93-amino-acid chain: Small ribosomal subunit protein uS17 (93 aa).

It belongs to the universal ribosomal protein uS17 family. As to quaternary structure, part of the 30S ribosomal subunit.

One of the primary rRNA binding proteins, it binds specifically to the 5'-end of 16S ribosomal RNA. The sequence is that of Small ribosomal subunit protein uS17 from Corynebacterium aurimucosum (strain ATCC 700975 / DSM 44827 / CIP 107346 / CN-1) (Corynebacterium nigricans).